The sequence spans 346 residues: Methylthioribose-1-phosphate isomerase (346 aa).

Substrate is bound by residues 48-50, R91, and Q196; that span reads RGA. D237 serves as the catalytic Proton donor. 247-248 is a substrate binding site; sequence NK.

It belongs to the eIF-2B alpha/beta/delta subunits family. MtnA subfamily.

The enzyme catalyses 5-(methylsulfanyl)-alpha-D-ribose 1-phosphate = 5-(methylsulfanyl)-D-ribulose 1-phosphate. It participates in amino-acid biosynthesis; L-methionine biosynthesis via salvage pathway; L-methionine from S-methyl-5-thio-alpha-D-ribose 1-phosphate: step 1/6. Its function is as follows. Catalyzes the interconversion of methylthioribose-1-phosphate (MTR-1-P) into methylthioribulose-1-phosphate (MTRu-1-P). The polypeptide is Methylthioribose-1-phosphate isomerase (Thermosipho africanus (strain TCF52B)).